We begin with the raw amino-acid sequence, 333 residues long: Protein RecA (333 aa).

69–76 (GPESSGKT) is an ATP binding site.

This sequence belongs to the RecA family.

Its subcellular location is the cytoplasm. Can catalyze the hydrolysis of ATP in the presence of single-stranded DNA, the ATP-dependent uptake of single-stranded DNA by duplex DNA, and the ATP-dependent hybridization of homologous single-stranded DNAs. It interacts with LexA causing its activation and leading to its autocatalytic cleavage. The sequence is that of Protein RecA from Mesoplasma florum (strain ATCC 33453 / NBRC 100688 / NCTC 11704 / L1) (Acholeplasma florum).